The sequence spans 287 residues: MASLRDIKSRITSTKKTSQITKAMQMVSAAKLNRAENNAKSFVPYMDKIQEVVSNVGRVSGNVKHPMLLSREVKKTAYLVITSDRGLAGAFNSSVLRSAYQAMQERHQSKDEYAVIAIGRVGRDFFKKREIPIISELTGLGDEVTFTEIKDLARQTIQMFIDGAFDELHLVYNHFVSAITQEVTEKKLLPLSDLGSGGGKRTASYEFEPSEEEVLEVLLPQYAESLIFGALLDSKASEHAARMTAMKNATDNAKELIDSLSLSYNRARQAAITQEITEIVGGAAALE.

This sequence belongs to the ATPase gamma chain family. In terms of assembly, F-type ATPases have 2 components, CF(1) - the catalytic core - and CF(0) - the membrane proton channel. CF(1) has five subunits: alpha(3), beta(3), gamma(1), delta(1), epsilon(1). CF(0) has three main subunits: a, b and c. The F(1)F(0) complex interacts with SpoIIIJ and YqjG; YqgA is found in the same complex. Interacts with FloT.

It localises to the cell membrane. Its subcellular location is the membrane raft. Functionally, produces ATP from ADP in the presence of a proton gradient across the membrane. The gamma chain is believed to be important in regulating ATPase activity and the flow of protons through the CF(0) complex. This chain is ATP synthase gamma chain, found in Bacillus subtilis (strain 168).